Consider the following 783-residue polypeptide: ATP-dependent zinc metalloprotease FtsH (783 aa).

Residues 1 to 16 (MSETPNTNEQNNPNNQ) are compositionally biased toward low complexity. The interval 1-79 (MSETPNTNEQ…DKEEDFASRL (79 aa)) is disordered. Over 1-86 (MSETPNTNEQ…SRLNTRPPQR (86 aa)) the chain is Cytoplasmic. Positions 35-61 (MPERPERHNQADGAPKRPGDDDRKSER) are enriched in basic and acidic residues. Residues 87–107 (ASIITIIIIFLVAFFIGSQMM) traverse the membrane as a helical segment. The Extracellular segment spans residues 108 to 233 (NMVHGEETDD…EYQVTLPSNV (126 aa)). The helical transmembrane segment at 234–254 (TEILISVLPMLLFAGLLIYFF) threads the bilayer. At 255–783 (SQMSKANNSQ…APQPPAAPQQ (529 aa)) the chain is on the cytoplasmic side. 325-332 (GPPGTGKT) is a binding site for ATP. H547 contacts Zn(2+). E548 is an active-site residue. Zn(2+) is bound by residues H551 and D623. The span at 738-771 (EAAAKAADQAEQPQVEAEPVAQVATPAAPVAPAV) shows a compositional bias: low complexity. The interval 738-783 (EAAAKAADQAEQPQVEAEPVAQVATPAAPVAPAVPEAPQPPAAPQQ) is disordered. Positions 772-783 (PEAPQPPAAPQQ) are enriched in pro residues.

This sequence in the central section; belongs to the AAA ATPase family. It in the C-terminal section; belongs to the peptidase M41 family. In terms of assembly, homohexamer. Requires Zn(2+) as cofactor.

The protein resides in the cell membrane. Its function is as follows. Acts as a processive, ATP-dependent zinc metallopeptidase for both cytoplasmic and membrane proteins. Plays a role in the quality control of integral membrane proteins. This chain is ATP-dependent zinc metalloprotease FtsH, found in Slackia heliotrinireducens (strain ATCC 29202 / DSM 20476 / NCTC 11029 / RHS 1) (Peptococcus heliotrinreducens).